Consider the following 406-residue polypeptide: 4-hydroxy-3-methylbut-2-enyl diphosphate reductase (406 aa).

Residue C66 participates in [4Fe-4S] cluster binding. H96 contributes to the (2E)-4-hydroxy-3-methylbut-2-enyl diphosphate binding site. H96 lines the dimethylallyl diphosphate pocket. H96 contacts isopentenyl diphosphate. C157 contributes to the [4Fe-4S] cluster binding site. Residue H185 coordinates (2E)-4-hydroxy-3-methylbut-2-enyl diphosphate. Position 185 (H185) interacts with dimethylallyl diphosphate. H185 lines the isopentenyl diphosphate pocket. The active-site Proton donor is the E187. T250 provides a ligand contact to (2E)-4-hydroxy-3-methylbut-2-enyl diphosphate. Position 288 (C288) interacts with [4Fe-4S] cluster. S317, S318, N319, and S379 together coordinate (2E)-4-hydroxy-3-methylbut-2-enyl diphosphate. 4 residues coordinate dimethylallyl diphosphate: S317, S318, N319, and S379. The isopentenyl diphosphate site is built by S317, S318, N319, and S379.

This sequence belongs to the IspH family. The cofactor is [4Fe-4S] cluster.

It catalyses the reaction isopentenyl diphosphate + 2 oxidized [2Fe-2S]-[ferredoxin] + H2O = (2E)-4-hydroxy-3-methylbut-2-enyl diphosphate + 2 reduced [2Fe-2S]-[ferredoxin] + 2 H(+). The enzyme catalyses dimethylallyl diphosphate + 2 oxidized [2Fe-2S]-[ferredoxin] + H2O = (2E)-4-hydroxy-3-methylbut-2-enyl diphosphate + 2 reduced [2Fe-2S]-[ferredoxin] + 2 H(+). The protein operates within isoprenoid biosynthesis; dimethylallyl diphosphate biosynthesis; dimethylallyl diphosphate from (2E)-4-hydroxy-3-methylbutenyl diphosphate: step 1/1. Its pathway is isoprenoid biosynthesis; isopentenyl diphosphate biosynthesis via DXP pathway; isopentenyl diphosphate from 1-deoxy-D-xylulose 5-phosphate: step 6/6. Its function is as follows. Catalyzes the conversion of 1-hydroxy-2-methyl-2-(E)-butenyl 4-diphosphate (HMBPP) into a mixture of isopentenyl diphosphate (IPP) and dimethylallyl diphosphate (DMAPP). Acts in the terminal step of the DOXP/MEP pathway for isoprenoid precursor biosynthesis. This is 4-hydroxy-3-methylbut-2-enyl diphosphate reductase from Synechococcus sp. (strain RCC307).